A 424-amino-acid chain; its full sequence is Dihydroorotase (424 aa).

Zn(2+) contacts are provided by His-61 and His-63. Residues 63–65 (HLR) and Asn-95 each bind substrate. Zn(2+)-binding residues include Asp-153, His-180, and His-233. A substrate-binding site is contributed by Asn-279. Residue Asp-306 coordinates Zn(2+). Asp-306 is an active-site residue. Residue His-310 coordinates substrate.

It belongs to the metallo-dependent hydrolases superfamily. DHOase family. Class I DHOase subfamily. Requires Zn(2+) as cofactor.

The enzyme catalyses (S)-dihydroorotate + H2O = N-carbamoyl-L-aspartate + H(+). It participates in pyrimidine metabolism; UMP biosynthesis via de novo pathway; (S)-dihydroorotate from bicarbonate: step 3/3. Its function is as follows. Catalyzes the reversible cyclization of carbamoyl aspartate to dihydroorotate. In Citrifermentans bemidjiense (strain ATCC BAA-1014 / DSM 16622 / JCM 12645 / Bem) (Geobacter bemidjiensis), this protein is Dihydroorotase.